The following is a 120-amino-acid chain: MDYEFLRDVTGVVKVRMSMGHEVIGHWFNEEVKENLALLDEVEDAARTLKGSERSWQRAGHEYTLWMDGEEVMVRANQLEFAGDEMEEGMNYYDEESLSLCGVEDFLQVVAAYRDFVQQK.

It belongs to the UPF0231 family.

This chain is UPF0231 protein YacL, found in Escherichia fergusonii (strain ATCC 35469 / DSM 13698 / CCUG 18766 / IAM 14443 / JCM 21226 / LMG 7866 / NBRC 102419 / NCTC 12128 / CDC 0568-73).